We begin with the raw amino-acid sequence, 200 residues long: Imidazoleglycerol-phosphate dehydratase (200 aa).

It belongs to the imidazoleglycerol-phosphate dehydratase family.

It localises to the cytoplasm. The catalysed reaction is D-erythro-1-(imidazol-4-yl)glycerol 3-phosphate = 3-(imidazol-4-yl)-2-oxopropyl phosphate + H2O. It participates in amino-acid biosynthesis; L-histidine biosynthesis; L-histidine from 5-phospho-alpha-D-ribose 1-diphosphate: step 6/9. The chain is Imidazoleglycerol-phosphate dehydratase from Leifsonia xyli subsp. xyli (strain CTCB07).